Reading from the N-terminus, the 747-residue chain is 3',5'-cyclic-AMP phosphodiesterase 4D (747 aa).

The disordered stretch occupies residues 1–28 (MERDTCDVLSRSKSASEETLHSCNEEED). Residues 14 to 24 (SASEETLHSCN) are compositionally biased toward basic and acidic residues. A phosphoserine mark is found at serine 238, serine 240, serine 287, and serine 314. The disordered stretch occupies residues 282-302 (EVEIPSPTQKEKEKKKRPMSQ). One can recognise a PDEase domain in the interval 325 to 654 (VKTEQEDVLA…EWYQSTIPQS (330 aa)). Lysine 326 is covalently cross-linked (Glycyl lysine isopeptide (Lys-Gly) (interchain with G-Cter in SUMO)). Residue histidine 401 is the Proton donor of the active site. Position 401 (histidine 401) interacts with 3',5'-cyclic AMP. Histidine 401 lines the AMP pocket. Residues histidine 405, histidine 441, aspartate 442, and aspartate 559 each contribute to the Zn(2+) site. 5 residues coordinate AMP: aspartate 442, aspartate 559, asparagine 562, glutamine 610, and phenylalanine 613. Aspartate 442 is a binding site for Mg(2+). Aspartate 442 is a binding site for Mn(2+). 3',5'-cyclic AMP contacts are provided by glutamine 610 and phenylalanine 613. A disordered region spans residues 649–747 (STIPQSPSPA…CVPDDCCPDT (99 aa)). Polar residues predominate over residues 701–712 (CSDSKTLCTQDS). The span at 718–734 (PLDEQVEEEAVAEEESQ) shows a compositional bias: acidic residues.

The protein belongs to the cyclic nucleotide phosphodiesterase family. PDE4 subfamily. In terms of assembly, homodimer for the long isoforms. Isoforms with truncated N-termini are monomeric. Binds ARRB2. Interacts with PDE4DIP. Identified in a complex composed of RYR1, PDE4D, PKA, FKBP1A and protein phosphatase 1 (PP1). Interacts (via N-terminal region) with SHANK2 (via proline-rich region); the interaction is increased in a PKA-dependent manner. Requires Zn(2+) as cofactor. The cofactor is Mg(2+). Mn(2+) serves as cofactor. In terms of processing, sumoylation of long isoforms by PIAS4 augments their activation by PKA phosphorylation and represses their inhibition by ERK phosphorylation. Expressed in brain (at protein level). Isoform 7 is detected in heart, brain, lung, kidney and testis.

It localises to the cytoplasm. It is found in the membrane. The protein localises to the cytoskeleton. The protein resides in the microtubule organizing center. Its subcellular location is the centrosome. It localises to the apical cell membrane. It catalyses the reaction 3',5'-cyclic AMP + H2O = AMP + H(+). Its pathway is purine metabolism; 3',5'-cyclic AMP degradation; AMP from 3',5'-cyclic AMP: step 1/1. Inhibited by rolipram. Activated by phosphatidic acid. In terms of biological role, hydrolyzes the second messenger cAMP, which is a key regulator of many important physiological processes. This is 3',5'-cyclic-AMP phosphodiesterase 4D (Pde4d) from Mus musculus (Mouse).